Here is a 1045-residue protein sequence, read N- to C-terminus: Probable sucrose-phosphate synthase (1045 aa).

Basic and acidic residues-rich tracts occupy residues 93–115 and 124–137; these read ENEEAQRKTKRRMELERGRREAT and EGEKDISAHGDSTR. 3 disordered regions span residues 93-141, 222-243, and 662-692; these read ENEE…PRLP, WSYGEPTEMLNPRDSNGFDDDD, and IASSRQRQPQWQRSSDEGLDNQEPESPSDSL. Positions 664–674 are enriched in low complexity; the sequence is SSRQRQPQWQR.

Belongs to the glycosyltransferase 1 family. Homodimer or homotetramer. As to expression, predominantly active in tap root.

The enzyme catalyses beta-D-fructose 6-phosphate + UDP-alpha-D-glucose = sucrose 6(F)-phosphate + UDP + H(+). It functions in the pathway glycan biosynthesis; sucrose biosynthesis; sucrose from D-fructose 6-phosphate and UDP-alpha-D-glucose: step 1/2. Its activity is regulated as follows. Activity is regulated by phosphorylation and moderated by concentration of metabolites and light. Its function is as follows. Plays a role in photosynthetic sucrose synthesis by catalyzing the rate-limiting step of sucrose biosynthesis from UDP-glucose and fructose- 6-phosphate. Involved in the regulation of carbon partitioning in the leaves of plants. May regulate the synthesis of sucrose and therefore play a major role as a limiting factor in the export of photoassimilates out of the leaf. Plays a role for sucrose availability that is essential for plant growth and fiber elongation. This is Probable sucrose-phosphate synthase (SPS) from Beta vulgaris (Sugar beet).